Here is a 303-residue protein sequence, read N- to C-terminus: Recombination-associated protein RdgC (303 aa).

This sequence belongs to the RdgC family.

The protein localises to the cytoplasm. It localises to the nucleoid. In terms of biological role, may be involved in recombination. The chain is Recombination-associated protein RdgC from Aeromonas hydrophila subsp. hydrophila (strain ATCC 7966 / DSM 30187 / BCRC 13018 / CCUG 14551 / JCM 1027 / KCTC 2358 / NCIMB 9240 / NCTC 8049).